Here is a 108-residue protein sequence, read N- to C-terminus: PTS system fructose-like EIIB component 1 (108 aa).

In terms of domain architecture, PTS EIIB type-2 spans 1–101; it reads MSKKLIALCA…AAGIIKEIEE (101 aa). Catalysis depends on C11, which acts as the Phosphocysteine intermediate. The residue at position 11 (C11) is a Phosphocysteine; by EIIA.

The protein resides in the cytoplasm. It carries out the reaction D-fructose(out) + N(pros)-phospho-L-histidyl-[protein] = D-fructose 1-phosphate(in) + L-histidyl-[protein]. Its function is as follows. The phosphoenolpyruvate-dependent sugar phosphotransferase system (sugar PTS), a major carbohydrate active transport system, catalyzes the phosphorylation of incoming sugar substrates concomitantly with their translocation across the cell membrane. The enzyme II FryABC PTS system is involved in fructose transport. This chain is PTS system fructose-like EIIB component 1 (fryB), found in Shigella flexneri.